A 215-amino-acid chain; its full sequence is Rac-like GTP-binding protein ARAC10 (215 aa).

15–22 (GDGAVGKT) contacts GTP. The Effector region signature appears at 37 to 45 (YIPTVFDNF). Residues 62-66 (DTAGQ) and 120-123 (TKLD) contribute to the GTP site. 2 S-palmitoyl cysteine lipidation sites follow: Cys-202 and Cys-208.

The protein belongs to the small GTPase superfamily. Rho family. As to quaternary structure, component of the active ARAC10-IRC5-KIN13A complex. Interacts with ICR5.

It is found in the membrane. Its subcellular location is the cytoplasm. The protein resides in the cytoskeleton. Its function is as follows. Involved in local disassembly of cortical microtubules when associated with ICR5 and KIN13A. In Arabidopsis thaliana (Mouse-ear cress), this protein is Rac-like GTP-binding protein ARAC10 (ARAC10).